A 342-amino-acid polypeptide reads, in one-letter code: MQVTQRWNREQAISLFNKPFFDLLFQAQQVHRKYFRLGQVQISTLLSIKTGNCAEDCKYCPQSSHYETKLDNEPLVQLPQVLAAAKKASDAGSTRFCIGAAWKKIHDRDMPLLEQIVTGVKAIGLETCMTLGILKPQQAQRLAKAGLDFYNHNLDTSPEFYHSIVTTRSYQDRLNTIENVRKAGIKICSGGIIGLGETISDRAGLLVELANLPEPPSSVPINMLVKVRGTPMFDNKDVDPFDLIRMIAVTRIMMPTSYVRLSAGREQMNEQTQAICFMAGANSIFYGRKLLTSSNPTEDSDKRLFRKLGMQIEKHTTIKNSNWKKKKLLLHDNQQHDNTISS.

Residues 38 to 262 enclose the Radical SAM core domain; it reads GQVQISTLLS…MMPTSYVRLS (225 aa). Residues Cys-53, Cys-57, and Cys-60 each coordinate [4Fe-4S] cluster. [2Fe-2S] cluster contacts are provided by Cys-97, Cys-128, Cys-188, and Arg-260.

This sequence belongs to the radical SAM superfamily. Biotin synthase family. Homodimer. [4Fe-4S] cluster is required as a cofactor. The cofactor is [2Fe-2S] cluster.

It catalyses the reaction (4R,5S)-dethiobiotin + (sulfur carrier)-SH + 2 reduced [2Fe-2S]-[ferredoxin] + 2 S-adenosyl-L-methionine = (sulfur carrier)-H + biotin + 2 5'-deoxyadenosine + 2 L-methionine + 2 oxidized [2Fe-2S]-[ferredoxin]. It participates in cofactor biosynthesis; biotin biosynthesis; biotin from 7,8-diaminononanoate: step 2/2. In terms of biological role, catalyzes the conversion of dethiobiotin (DTB) to biotin by the insertion of a sulfur atom into dethiobiotin via a radical-based mechanism. This chain is Biotin synthase, found in Baumannia cicadellinicola subsp. Homalodisca coagulata.